Here is a 453-residue protein sequence, read N- to C-terminus: Bis(5'-adenosyl)-triphosphatase ENPP4 (453 aa).

An N-terminal signal peptide occupies residues Met1–Gly18. The Extracellular segment spans residues Asn19–Ala407. Zn(2+) contacts are provided by Asp34 and Thr70. The AMP-threonine intermediate role is filled by Thr70. Substrate is bound by residues Asn91 and Tyr154. N-linked (GlcNAc...) asparagine glycosylation is present at Asn166. Zn(2+) contacts are provided by Asp189, His193, Asp237, and His238. Asp189 provides a ligand contact to substrate. Cysteines 254 and 287 form a disulfide. N-linked (GlcNAc...) asparagine glycosylation is present at Asn276. Position 336 (His336) interacts with Zn(2+). A disulfide bridge links Cys394 with Cys401. The chain crosses the membrane as a helical span at residues Ile408 to Met428. Residues Gln429–Gly453 lie on the Cytoplasmic side of the membrane.

It belongs to the nucleotide pyrophosphatase/phosphodiesterase family. The cofactor is Zn(2+).

The protein resides in the cell membrane. The enzyme catalyses P(1),P(3)-bis(5'-adenosyl) triphosphate + H2O = AMP + ADP + 2 H(+). In terms of biological role, hydrolyzes extracellular Ap3A into AMP and ADP, and Ap4A into AMP and ATP. Ap3A and Ap4A are diadenosine polyphosphates thought to induce proliferation of vascular smooth muscle cells. Acts as a procoagulant, mediating platelet aggregation at the site of nascent thrombus via release of ADP from Ap3A and activation of ADP receptors. The protein is Bis(5'-adenosyl)-triphosphatase ENPP4 (ENPP4) of Bos taurus (Bovine).